The following is a 251-amino-acid chain: SRR1-like protein (251 aa).

This sequence belongs to the SRR1 family.

The protein resides in the cytoplasm. It localises to the nucleus. The polypeptide is SRR1-like protein (Schizosaccharomyces pombe (strain 972 / ATCC 24843) (Fission yeast)).